Consider the following 473-residue polypeptide: Ribulose bisphosphate carboxylase large chain 1 (473 aa).

N116 and T166 together coordinate substrate. K168 functions as the Proton acceptor in the catalytic mechanism. Residue K170 coordinates substrate. Mg(2+)-binding residues include K194, D196, and E197. Residue K194 is modified to N6-carboxylysine. H287 (proton acceptor) is an active-site residue. R288, H320, and S372 together coordinate substrate.

This sequence belongs to the RuBisCO large chain family. Type I subfamily. As to quaternary structure, heterohexadecamer of 8 large chains and 8 small chains. Mg(2+) is required as a cofactor.

The catalysed reaction is 2 (2R)-3-phosphoglycerate + 2 H(+) = D-ribulose 1,5-bisphosphate + CO2 + H2O. It carries out the reaction D-ribulose 1,5-bisphosphate + O2 = 2-phosphoglycolate + (2R)-3-phosphoglycerate + 2 H(+). RuBisCO catalyzes two reactions: the carboxylation of D-ribulose 1,5-bisphosphate, the primary event in carbon dioxide fixation, as well as the oxidative fragmentation of the pentose substrate. Both reactions occur simultaneously and in competition at the same active site. In Nitrobacter winogradskyi (strain ATCC 25391 / DSM 10237 / CIP 104748 / NCIMB 11846 / Nb-255), this protein is Ribulose bisphosphate carboxylase large chain 1.